The following is a 330-amino-acid chain: tRNA U34 carboxymethyltransferase (330 aa).

Residues Lys-91, Trp-105, Lys-110, Gly-130, 152 to 154, 181 to 182, Met-196, Tyr-200, and Arg-315 contribute to the carboxy-S-adenosyl-L-methionine site; these read DPS and IE.

Belongs to the class I-like SAM-binding methyltransferase superfamily. CmoB family. Homotetramer.

It catalyses the reaction carboxy-S-adenosyl-L-methionine + 5-hydroxyuridine(34) in tRNA = 5-carboxymethoxyuridine(34) in tRNA + S-adenosyl-L-homocysteine + H(+). Functionally, catalyzes carboxymethyl transfer from carboxy-S-adenosyl-L-methionine (Cx-SAM) to 5-hydroxyuridine (ho5U) to form 5-carboxymethoxyuridine (cmo5U) at position 34 in tRNAs. This chain is tRNA U34 carboxymethyltransferase, found in Shewanella sediminis (strain HAW-EB3).